The chain runs to 95 residues: Defensin-like protein 247 (95 aa).

A signal peptide spans 1-24 (MKFAAIFLVTCVFFSLFSSNLSQG). Intrachain disulfides connect cysteine 37/cysteine 94, cysteine 48/cysteine 77, cysteine 56/cysteine 87, and cysteine 75/cysteine 89.

This sequence belongs to the DEFL family.

The protein resides in the secreted. The sequence is that of Defensin-like protein 247 (SCRL6) from Arabidopsis thaliana (Mouse-ear cress).